The sequence spans 217 residues: Transmembrane protein 253 (217 aa).

A run of 4 helical transmembrane segments spans residues 33 to 53 (LVLAVSQLWLAVVVVPLAVSV), 62 to 82 (MATALPLGPGASGLLTGTVTL), 96 to 116 (MMIFNTFNLILGFIVVVVEVM), and 138 to 158 (LSAEAFTLGGVLVSVHALFLL). Residues 187–217 (PGLENGPTVASTGANERVGQREQTRAALLPP) are disordered.

It is found in the membrane. The chain is Transmembrane protein 253 (TMEM253) from Homo sapiens (Human).